The chain runs to 144 residues: Transcription antitermination protein NusB (144 aa).

This sequence belongs to the NusB family.

In terms of biological role, involved in transcription antitermination. Required for transcription of ribosomal RNA (rRNA) genes. Binds specifically to the boxA antiterminator sequence of the ribosomal RNA (rrn) operons. The protein is Transcription antitermination protein NusB of Leifsonia xyli subsp. xyli (strain CTCB07).